The following is a 137-amino-acid chain: Large-conductance mechanosensitive channel (137 aa).

2 helical membrane-spanning segments follow: residues 10–30 and 76–96; these read FAMR…AAFG and GTFI…FSAV.

Belongs to the MscL family. In terms of assembly, homopentamer.

It localises to the cell inner membrane. Its function is as follows. Channel that opens in response to stretch forces in the membrane lipid bilayer. May participate in the regulation of osmotic pressure changes within the cell. The protein is Large-conductance mechanosensitive channel of Yersinia pseudotuberculosis serotype O:1b (strain IP 31758).